Consider the following 441-residue polypeptide: Ribosomal protein uS12 methylthiotransferase RimO (441 aa).

An MTTase N-terminal domain is found at 7–117 (ASIAMISLGC…VVLEVHRAAP (111 aa)). Residues cysteine 16, cysteine 52, cysteine 81, cysteine 150, cysteine 154, and cysteine 157 each coordinate [4Fe-4S] cluster. One can recognise a Radical SAM core domain in the interval 136-373 (LTPRHYAYLK…MAHQQAISAA (238 aa)). The region spanning 376–441 (QTRVGREIDV…DEYDLHGDAV (66 aa)) is the TRAM domain.

It belongs to the methylthiotransferase family. RimO subfamily. [4Fe-4S] cluster is required as a cofactor.

The protein localises to the cytoplasm. It carries out the reaction L-aspartate(89)-[ribosomal protein uS12]-hydrogen + (sulfur carrier)-SH + AH2 + 2 S-adenosyl-L-methionine = 3-methylsulfanyl-L-aspartate(89)-[ribosomal protein uS12]-hydrogen + (sulfur carrier)-H + 5'-deoxyadenosine + L-methionine + A + S-adenosyl-L-homocysteine + 2 H(+). Catalyzes the methylthiolation of an aspartic acid residue of ribosomal protein uS12. This Bordetella petrii (strain ATCC BAA-461 / DSM 12804 / CCUG 43448) protein is Ribosomal protein uS12 methylthiotransferase RimO.